A 638-amino-acid chain; its full sequence is Chaperone protein DnaK (638 aa).

Position 198 is a phosphothreonine; by autocatalysis (threonine 198). A compositionally biased stretch (low complexity) spans 603 to 618 (QQAQAQQAQGADADAQ). The segment at 603-638 (QQAQAQQAQGADADAQQSKEDDVVDAEFEEVKDDKK) is disordered. The segment covering 624 to 638 (DVVDAEFEEVKDDKK) has biased composition (acidic residues).

Belongs to the heat shock protein 70 family.

Acts as a chaperone. The chain is Chaperone protein DnaK from Vibrio campbellii (strain ATCC BAA-1116).